A 590-amino-acid polypeptide reads, in one-letter code: DNA mismatch repair protein MutL (590 aa).

This sequence belongs to the DNA mismatch repair MutL/HexB family.

This protein is involved in the repair of mismatches in DNA. It is required for dam-dependent methyl-directed DNA mismatch repair. May act as a 'molecular matchmaker', a protein that promotes the formation of a stable complex between two or more DNA-binding proteins in an ATP-dependent manner without itself being part of a final effector complex. The polypeptide is DNA mismatch repair protein MutL (Caldanaerobacter subterraneus subsp. tengcongensis (strain DSM 15242 / JCM 11007 / NBRC 100824 / MB4) (Thermoanaerobacter tengcongensis)).